Consider the following 229-residue polypeptide: Wtf element wtf14 (229 aa).

A compositionally biased stretch (basic and acidic residues) spans 1 to 26 (MENNHHLAKDSLDELNPKRGKGEHET). Residues 1 to 27 (MENNHHLAKDSLDELNPKRGKGEHETQ) are disordered. Transmembrane regions (helical) follow at residues 71-91 (IPAV…YLVF), 100-120 (VLFG…LLAT), 151-171 (LYAI…LMFF), and 188-208 (VIGV…PGLF).

This sequence belongs to the WTF family.

Its subcellular location is the endoplasmic reticulum membrane. Functionally, may act in meiotic drive. The chain is Wtf element wtf14 from Schizosaccharomyces pombe (strain 972 / ATCC 24843) (Fission yeast).